Here is a 320-residue protein sequence, read N- to C-terminus: Variant surface glycoprotein ILTAT 1.2 (320 aa).

Residues N146, N282, and N295 are each glycosylated (N-linked (GlcNAc...) asparagine). A disordered region spans residues 297–320; that stretch reads TKATENGVPVAQTQTGGSETTTEK. Residues 308–320 are compositionally biased toward low complexity; the sequence is QTQTGGSETTTEK.

It localises to the cell membrane. VSG forms a coat on the surface of the parasite. The trypanosome evades the immune response of the host by expressing a series of antigenically distinct VSGs from an estimated 1000 VSG genes. This is Variant surface glycoprotein ILTAT 1.2 from Trypanosoma brucei brucei.